Reading from the N-terminus, the 139-residue chain is D-ribose pyranase (139 aa).

The Proton donor role is filled by His-20. Residues Asp-28, His-106, and 128–130 (YAN) each bind substrate.

It belongs to the RbsD / FucU family. RbsD subfamily. Homodecamer.

The protein localises to the cytoplasm. It carries out the reaction beta-D-ribopyranose = beta-D-ribofuranose. It functions in the pathway carbohydrate metabolism; D-ribose degradation; D-ribose 5-phosphate from beta-D-ribopyranose: step 1/2. Catalyzes the interconversion of beta-pyran and beta-furan forms of D-ribose. The chain is D-ribose pyranase from Pectobacterium atrosepticum (strain SCRI 1043 / ATCC BAA-672) (Erwinia carotovora subsp. atroseptica).